The following is a 155-amino-acid chain: Troponin C, isoform 2 (155 aa).

EF-hand domains lie at 11–46 (EQIAVLQKAFNSFDHQKTGSIPTEMVADILRLMGQP), 47–82 (FDRQILDELIDEVDEDKSGRLEFEEFVQLAAKFIVE), 87–122 (AMQKELREAFRLYDKQGNGYIPTSCLKEILKELDDQ), and 123–155 (LTEQELDIMIEEIDSDGSGTVDFDEFMEMMTGE). Ca(2+) contacts are provided by D60, D62, S64, R66, and E71. Residues D136, D138, S140, T142, and E147 each contribute to the Ca(2+) site.

This sequence belongs to the troponin C family. As to expression, accumulates almost exclusively in larval muscles.

The protein is Troponin C, isoform 2 (TpnC47D) of Drosophila melanogaster (Fruit fly).